An 860-amino-acid polypeptide reads, in one-letter code: DNA mismatch repair protein MutS (860 aa).

Position 625 to 632 (625 to 632 (GPNMGGKS)) interacts with ATP.

Belongs to the DNA mismatch repair MutS family.

Functionally, this protein is involved in the repair of mismatches in DNA. It is possible that it carries out the mismatch recognition step. This protein has a weak ATPase activity. This Aeromonas hydrophila subsp. hydrophila (strain ATCC 7966 / DSM 30187 / BCRC 13018 / CCUG 14551 / JCM 1027 / KCTC 2358 / NCIMB 9240 / NCTC 8049) protein is DNA mismatch repair protein MutS.